Consider the following 119-residue polypeptide: Large ribosomal subunit protein bL20 (119 aa).

It belongs to the bacterial ribosomal protein bL20 family.

In terms of biological role, binds directly to 23S ribosomal RNA and is necessary for the in vitro assembly process of the 50S ribosomal subunit. It is not involved in the protein synthesizing functions of that subunit. The protein is Large ribosomal subunit protein bL20 of Geobacillus kaustophilus (strain HTA426).